A 1045-amino-acid chain; its full sequence is Elongation factor 3 (1045 aa).

HEAT repeat units follow at residues 5 to 42 (DQSL…GNII), 43 to 85 (EHDI…PSVE), 86 to 123 (PFVI…AINP), 125 to 162 (AIKA…AAKE), 166 to 203 (LRMP…TVDN), 205 to 241 (DIER…EVTP), and 242 to 279 (ATLS…LVED). Positions 42, 44, and 83 each coordinate ADP. Positions 392, 396, and 397 each coordinate ADP. 2 ABC transporter domains span residues 426–641 (DEGE…YYEL) and 667–993 (VKVS…KKED). ADP is bound by residues Asn-703, Glu-922, Asn-925, and His-951. Residues 974 to 1045 (SGHNWVSGQG…AYVSSDDEDF (72 aa)) form a disordered region. Basic residues predominate over residues 1007–1031 (GGKKKKKLSSAELRKKKKERMKKKK).

Belongs to the ABC transporter superfamily. ABCF family. EF3 subfamily. In terms of assembly, monomer.

It localises to the cytoplasm. The protein localises to the cytosol. The catalysed reaction is ATP + H2O = ADP + phosphate + H(+). Its pathway is protein biosynthesis; polypeptide chain elongation. In terms of biological role, ribosome-dependent ATPase that functions in cytoplasmic translation elongation. Required for the ATP-dependent release of deacylated tRNA from the ribosomal E-site during protein biosynthesis. Stimulates the eEF1A-dependent binding of aminoacyl-tRNA to the ribosomal A-site, which has reduced affinity for tRNA as long as the E-site is occupied. Assists translation termination by stimulating the release of nascent protein from the ribosome by release factors. This chain is Elongation factor 3 (TEF3), found in Candida glabrata (strain ATCC 2001 / BCRC 20586 / JCM 3761 / NBRC 0622 / NRRL Y-65 / CBS 138) (Yeast).